Consider the following 417-residue polypeptide: 3-isopropylmalate dehydratase large subunit 2 (417 aa).

[4Fe-4S] cluster contacts are provided by Cys298, Cys358, and Cys361.

Belongs to the aconitase/IPM isomerase family. LeuC type 2 subfamily. In terms of assembly, heterodimer of LeuC and LeuD. [4Fe-4S] cluster serves as cofactor.

The catalysed reaction is (2R,3S)-3-isopropylmalate = (2S)-2-isopropylmalate. Its pathway is amino-acid biosynthesis; L-leucine biosynthesis; L-leucine from 3-methyl-2-oxobutanoate: step 2/4. Functionally, catalyzes the isomerization between 2-isopropylmalate and 3-isopropylmalate, via the formation of 2-isopropylmaleate. The polypeptide is 3-isopropylmalate dehydratase large subunit 2 (Thermotoga maritima (strain ATCC 43589 / DSM 3109 / JCM 10099 / NBRC 100826 / MSB8)).